A 154-amino-acid chain; its full sequence is Endoribonuclease YbeY (154 aa).

The Zn(2+) site is built by histidine 113, histidine 117, and histidine 123.

The protein belongs to the endoribonuclease YbeY family. It depends on Zn(2+) as a cofactor.

The protein resides in the cytoplasm. Its function is as follows. Single strand-specific metallo-endoribonuclease involved in late-stage 70S ribosome quality control and in maturation of the 3' terminus of the 16S rRNA. This Aeromonas hydrophila subsp. hydrophila (strain ATCC 7966 / DSM 30187 / BCRC 13018 / CCUG 14551 / JCM 1027 / KCTC 2358 / NCIMB 9240 / NCTC 8049) protein is Endoribonuclease YbeY.